Here is a 432-residue protein sequence, read N- to C-terminus: MYDRLKGFRDFYPAEMGPRRAAIDAIEDAAASYGFREVGTPAMERTEMYVDKSGAEIVDELYSFTDQGGRDVALTPELTPTVARMVVAKQQALSKPIKWYSSRPFWRYEEPQQGRFREFYQTNLDIFGTSDPRADAEVLAVAADGLTSLGLTGADFEFRVSHRDILGGLLAAFDATVDTEAAIRTVDKREKIERAAYLDDLAAAGLSYDQAEQFDDLLDGDDLDALVSFAGTDRVRDAVANLRNVLDAAETLGVRQYCDVSLTTARGLDYYTGVVFECFDSTGDVGRAVFGGGRYDDLIERFGGQPTPAVGVAPGHATLNLLLENAGVLPDDEFTPDYYVLQVGDTDAEAADVASALRERGNRVDTDITGRSFGAQMNYADNVGADTVVIVGEQDLADGNVTIKNMASGEQTTAPIAAFPGAHDAPRVEDFA.

It belongs to the class-II aminoacyl-tRNA synthetase family.

It localises to the cytoplasm. It carries out the reaction tRNA(His) + L-histidine + ATP = L-histidyl-tRNA(His) + AMP + diphosphate + H(+). The protein is Histidine--tRNA ligase of Halobacterium salinarum (strain ATCC 29341 / DSM 671 / R1).